We begin with the raw amino-acid sequence, 367 residues long: 2-aminoethylphosphonate--pyruvate transaminase (367 aa).

The residue at position 194 (Lys-194) is an N6-(pyridoxal phosphate)lysine.

This sequence belongs to the class-V pyridoxal-phosphate-dependent aminotransferase family. PhnW subfamily. Homodimer. Pyridoxal 5'-phosphate is required as a cofactor.

The enzyme catalyses (2-aminoethyl)phosphonate + pyruvate = phosphonoacetaldehyde + L-alanine. Its function is as follows. Involved in phosphonate degradation. The polypeptide is 2-aminoethylphosphonate--pyruvate transaminase (Salmonella heidelberg (strain SL476)).